The chain runs to 153 residues: Mediator of RNA polymerase II transcription subunit 22 (153 aa).

It belongs to the Mediator complex subunit 22 family. Component of the Mediator complex.

The protein localises to the nucleus. Functionally, component of the Mediator complex, a coactivator involved in the regulated transcription of nearly all RNA polymerase II-dependent genes. Mediator functions as a bridge to convey information from gene-specific regulatory proteins to the basal RNA polymerase II transcription machinery. Mediator is recruited to promoters by direct interactions with regulatory proteins and serves as a scaffold for the assembly of a functional preinitiation complex with RNA polymerase II and the general transcription factors. This chain is Mediator of RNA polymerase II transcription subunit 22 (mdt-22), found in Caenorhabditis briggsae.